The chain runs to 186 residues: Peptidyl-tRNA hydrolase (186 aa).

Tyr16 lines the tRNA pocket. The active-site Proton acceptor is His21. The tRNA site is built by Tyr60 and Asn62.

Belongs to the PTH family. Monomer.

The protein localises to the cytoplasm. The catalysed reaction is an N-acyl-L-alpha-aminoacyl-tRNA + H2O = an N-acyl-L-amino acid + a tRNA + H(+). Hydrolyzes ribosome-free peptidyl-tRNAs (with 1 or more amino acids incorporated), which drop off the ribosome during protein synthesis, or as a result of ribosome stalling. In terms of biological role, catalyzes the release of premature peptidyl moieties from peptidyl-tRNA molecules trapped in stalled 50S ribosomal subunits, and thus maintains levels of free tRNAs and 50S ribosomes. This is Peptidyl-tRNA hydrolase from Tropheryma whipplei (strain Twist) (Whipple's bacillus).